A 142-amino-acid polypeptide reads, in one-letter code: Nucleoside diphosphate kinase (142 aa).

Lysine 10, phenylalanine 58, arginine 86, threonine 92, arginine 103, and asparagine 113 together coordinate ATP. Histidine 116 (pros-phosphohistidine intermediate) is an active-site residue.

This sequence belongs to the NDK family. Homotetramer. Mg(2+) is required as a cofactor.

It localises to the cytoplasm. The catalysed reaction is a 2'-deoxyribonucleoside 5'-diphosphate + ATP = a 2'-deoxyribonucleoside 5'-triphosphate + ADP. It carries out the reaction a ribonucleoside 5'-diphosphate + ATP = a ribonucleoside 5'-triphosphate + ADP. In terms of biological role, major role in the synthesis of nucleoside triphosphates other than ATP. The ATP gamma phosphate is transferred to the NDP beta phosphate via a ping-pong mechanism, using a phosphorylated active-site intermediate. The polypeptide is Nucleoside diphosphate kinase (Ehrlichia chaffeensis (strain ATCC CRL-10679 / Arkansas)).